The chain runs to 554 residues: CTP synthase (554 aa).

The interval 1–279 (MTSSRKVRPT…DTFIIRRLGL (279 aa)) is amidoligase domain. A CTP-binding site is contributed by Ser-21. Ser-21 contacts UTP. ATP contacts are provided by residues 22 to 27 (SLGKGL) and Asp-79. Mg(2+)-binding residues include Asp-79 and Glu-153. CTP contacts are provided by residues 160-162 (DIE), 200-205 (KTKPTQ), and Lys-236. UTP contacts are provided by residues 200-205 (KTKPTQ) and Lys-236. A Glutamine amidotransferase type-1 domain is found at 304–553 (TVGIVGKYID…VKTALELRVH (250 aa)). Residue Gly-367 coordinates L-glutamine. Cys-394 (nucleophile; for glutamine hydrolysis) is an active-site residue. L-glutamine is bound by residues 395–398 (LGLQ), Glu-417, and Arg-478. Residues His-526 and Glu-528 contribute to the active site.

Belongs to the CTP synthase family. In terms of assembly, homotetramer.

The enzyme catalyses UTP + L-glutamine + ATP + H2O = CTP + L-glutamate + ADP + phosphate + 2 H(+). It catalyses the reaction L-glutamine + H2O = L-glutamate + NH4(+). The catalysed reaction is UTP + NH4(+) + ATP = CTP + ADP + phosphate + 2 H(+). It functions in the pathway pyrimidine metabolism; CTP biosynthesis via de novo pathway; CTP from UDP: step 2/2. With respect to regulation, allosterically activated by GTP, when glutamine is the substrate; GTP has no effect on the reaction when ammonia is the substrate. The allosteric effector GTP functions by stabilizing the protein conformation that binds the tetrahedral intermediate(s) formed during glutamine hydrolysis. Inhibited by the product CTP, via allosteric rather than competitive inhibition. Its function is as follows. Catalyzes the ATP-dependent amination of UTP to CTP with either L-glutamine or ammonia as the source of nitrogen. Regulates intracellular CTP levels through interactions with the four ribonucleotide triphosphates. The polypeptide is CTP synthase (Corynebacterium glutamicum (strain R)).